We begin with the raw amino-acid sequence, 160 residues long: MHYFFIIVIWLLSINTAWADCWLQAEKMFNIESELLYAIAQQESAMKPGAIGHNRDGSTDLGLMQINSFHMKRLKKMGISEKQLLQDPCISVIVGASILSDMMKIYGFSWEAVGAYNAGTSPKRSDIRKRYAKKIWENYRKLKEMSAEEKNKRLSIAVNK.

Residues 1–19 form the signal peptide; that stretch reads MHYFFIIVIWLLSINTAWA.

This sequence belongs to the IagB/IpgF/P19 family.

This chain is Invasion protein IagB (iagB), found in Salmonella typhi.